A 368-amino-acid chain; its full sequence is D-alanine--D-alanine ligase (368 aa).

One can recognise an ATP-grasp domain in the interval 151 to 358; that stretch reads KKLLAAEGLP…YRTLISTLVD (208 aa). 179–234 contacts ATP; the sequence is KAELGLPVFVKPARGGSSIGITRVSNWDGLDGAIAHARLHDPKVIVEGAIIGREVE. Mg(2+)-binding residues include aspartate 313, glutamate 325, and asparagine 327.

It belongs to the D-alanine--D-alanine ligase family. Requires Mg(2+) as cofactor. Mn(2+) serves as cofactor.

The protein localises to the cytoplasm. The enzyme catalyses 2 D-alanine + ATP = D-alanyl-D-alanine + ADP + phosphate + H(+). It participates in cell wall biogenesis; peptidoglycan biosynthesis. Its function is as follows. Cell wall formation. In Rhodococcus erythropolis (strain PR4 / NBRC 100887), this protein is D-alanine--D-alanine ligase.